The chain runs to 118 residues: Succinate dehydrogenase assembly factor 1, mitochondrial (118 aa).

Residues 14–16 (LYR) carry the LYR motif 1; required for interaction with HSC20 motif. The LYR motif 2; not required for interaction with HSC20 signature appears at 53–55 (LYR). The interaction with SDHB stretch occupies residues 53–65 (LYRRGRRQLQMLR). Residues 72–118 (MGAFVRTRGPTEESNGAGAPGTLSGEGDDPRKPLDSMRTPKTPLDGR) are disordered.

The protein belongs to the complex I LYR family. SDHAF1 subfamily. As to quaternary structure, interacts with SDHB within an SDHA-SDHB subcomplex. Also interacts with the iron-sulfur transfer complex formed by HSC20, HSPA9 and ISCU through direct binding to HSC20. Binding of SDHAF1 to SDHB precedes and is necessary for recruitment of the iron-sulfur transfer complex by SDHAF1.

The protein localises to the mitochondrion matrix. Plays an essential role in the assembly of succinate dehydrogenase (SDH), an enzyme complex (also referred to as respiratory complex II) that is a component of both the tricarboxylic acid (TCA) cycle and the mitochondrial electron transport chain, and which couples the oxidation of succinate to fumarate with the reduction of ubiquinone (coenzyme Q) to ubiquinol. Promotes maturation of the iron-sulfur protein subunit SDHB of the SDH catalytic dimer, protecting it from the deleterious effects of oxidants. May act together with SDHAF3. Contributes to iron-sulfur cluster incorporation into SDHB by binding to SDHB and recruiting the iron-sulfur transfer complex formed by HSC20, HSPA9 and ISCU through direct binding to HSC20. The polypeptide is Succinate dehydrogenase assembly factor 1, mitochondrial (Bos taurus (Bovine)).